Consider the following 445-residue polypeptide: Polyadenylate-binding protein RBP47A (445 aa).

Polar residues predominate over residues 1-12; it reads MQTPNNNGSTDS. Disordered stretches follow at residues 1-45 and 93-117; these read MQTP…WQQQ and AAYQ…GGDD. A compositionally biased stretch (pro residues) spans 22–35; sequence TPPPPLQQSTPPPQ. Composition is skewed to low complexity over residues 36–45 and 93–108; these read QQQQQQWQQQ and AAYQ…SQQQ. RRM domains are found at residues 119–199, 213–292, and 327–399; these read KTLW…WASF, LSIF…IATP, and STIF…WGRS.

This sequence belongs to the polyadenylate-binding RBP47 family. In terms of assembly, interacts with the poly(A) tail of mRNA in nucleus. Expressed in leaves, stems, flowers, and seedlings.

It localises to the nucleus. The protein localises to the cytoplasmic granule. In terms of biological role, heterogeneous nuclear ribonucleoprotein (hnRNP)-protein binding the poly(A) tail of mRNA and probably involved in some steps of pre-mRNA maturation. This is Polyadenylate-binding protein RBP47A (RBP47A) from Arabidopsis thaliana (Mouse-ear cress).